Consider the following 314-residue polypeptide: Chlorinase cctP2 (314 aa).

Residues 1-14 (MEGKTSRYQDEAHD) show a composition bias toward basic and acidic residues. The tract at residues 1–24 (MEGKTSRYQDEAHDSAGSFNEETE) is disordered. 2 short sequence motifs (HXXHC) span residues 150–154 (HALHC) and 177–181 (HIEHC).

The protein belongs to the ustYa family.

It participates in mycotoxin biosynthesis. Chlorinase; part of the gene cluster that mediates the biosynthesis of the mycotoxin cyclochlorotine, a hepatotoxic and carcinogenic cyclic chlorinated pentapeptide. Within the pathway, cctP2 catalyzes the formation of isocyclochlorotine via dichlorination of the Pro from the isocyclotine skeleton. The NRPS cctN initially catalyzes the condensation of L-serine (Ser), Pro, L-2-aminobutyrate (2Abu), Ser, and beta-Phe in this order to produce isocyclotine. After the dichlorination of Pro2 catalyzed by cctP2 to produce isocyclochlorotine, the cctO-mediated transacylation of isocyclochlorotine can furnish cyclochlorotine. The subsequent hydroxylation of cyclochlorotine by cctR yields hydroxycyclochlorotine as the final product. CctP1 probably acts as a phenylalanine aminomutase and provides the uncommon building block beta-Phe. Furthermore, 2Abu can be synthesized from threonine by one of the threonine dehydratases and transaminases localized outside of the cluster. The functions of the remaining proteins encoded by the cluster, cctM and cctT, have not been identified yet. This Talaromyces islandicus (Penicillium islandicum) protein is Chlorinase cctP2.